A 294-amino-acid polypeptide reads, in one-letter code: Diphthine synthase (294 aa).

S-adenosyl-L-methionine contacts are provided by residues D93, V96, 121-122 (SG), L173, and A220.

It belongs to the diphthine synthase family. In terms of assembly, homodimer.

It carries out the reaction 2-[(3S)-amino-3-carboxypropyl]-L-histidyl-[translation elongation factor 2] + 3 S-adenosyl-L-methionine = diphthine-[translation elongation factor 2] + 3 S-adenosyl-L-homocysteine + 3 H(+). The protein operates within protein modification; peptidyl-diphthamide biosynthesis. In terms of biological role, S-adenosyl-L-methionine-dependent methyltransferase that catalyzes the trimethylation of the amino group of the modified target histidine residue in translation elongation factor 2 (EF-2), to form an intermediate called diphthine. The three successive methylation reactions represent the second step of diphthamide biosynthesis. This is Diphthine synthase (dphB) from Aeropyrum pernix (strain ATCC 700893 / DSM 11879 / JCM 9820 / NBRC 100138 / K1).